Consider the following 323-residue polypeptide: Muscleblind-like protein 3 (323 aa).

C3H1-type zinc fingers lie at residues 13–41 (WLTL…HPSR), 47–73 (NGRV…HPPP), 177–205 (TDKL…HPLE), and 213–239 (ENSV…HPPA).

It belongs to the muscleblind family. As to expression, expressed in fast and slow myotomal muscle, heart, liver, skin, brain and testis.

The protein resides in the nucleus. Its subcellular location is the cytoplasm. Functionally, involved in pre-mRNA alternative splicing regulation. Could inhibit terminal muscle differentiation, acting at approximately the time of myogenin induction. This Takifugu rubripes (Japanese pufferfish) protein is Muscleblind-like protein 3 (mbnl3).